The following is a 483-amino-acid chain: SWI/SNF-related matrix-associated actin-dependent regulator of chromatin subfamily D member 3 (483 aa).

A2 is modified (N-acetylalanine). The tract at residues 26–102 is disordered; the sequence is VRPGMPSGAR…ARSRSAKRRK (77 aa). Positions 78-87 are enriched in low complexity; sequence QSQAQSQGQP. S178 carries the phosphoserine modification. Residues 258–335 enclose the SWIB/MDM2 domain; sequence YQPPQFKLDP…PQRLTALLLP (78 aa).

Belongs to the SMARCD family. As to quaternary structure, component of the multiprotein chromatin-remodeling complexes SWI/SNF: SWI/SNF-A (BAF), SWI/SNF-B (PBAF) and related complexes. The canonical complex contains a catalytic subunit (either SMARCA4/BRG1/BAF190A or SMARCA2/BRM/BAF190B) and at least SMARCE1, ACTL6A/BAF53, SMARCC1/BAF155, SMARCC2/BAF170, and SMARCB1/SNF5/BAF47. Other subunits specific to each of the complexes may also be present permitting several possible combinations developmentally and tissue specific. Component of the BAF complex, which includes at least actin (ACTB), ARID1A/BAF250A, ARID1B/BAF250B, SMARCA2/BRM, SMARCA4/BRG1/BAF190A, ACTL6A/BAF53, ACTL6B/BAF53B, SMARCE1/BAF57, SMARCC1/BAF155, SMARCC2/BAF170, SMARCB1/SNF5/INI1, and one or more SMARCD1/BAF60A, SMARCD2/BAF60B, or SMARCD3/BAF60C. In muscle cells, the BAF complex also contains DPF3. Component of neural progenitors-specific chromatin remodeling complex (npBAF complex) composed of at least, ARID1A/BAF250A or ARID1B/BAF250B, SMARCD1/BAF60A, SMARCD3/BAF60C, SMARCA2/BRM/BAF190B, SMARCA4/BRG1/BAF190A, SMARCB1/BAF47, SMARCC1/BAF155, SMARCE1/BAF57, SMARCC2/BAF170, PHF10/BAF45A, ACTL6A/BAF53A and actin. Component of neuron-specific chromatin remodeling complex (nBAF complex) composed of at least, ARID1A/BAF250A or ARID1B/BAF250B, SMARCD1/BAF60A, SMARCD3/BAF60C, SMARCA2/BRM/BAF190B, SMARCA4/BRG1/BAF190A, SMARCB1/BAF47, SMARCC1/BAF155, SMARCE1/BAF57, SMARCC2/BAF170, DPF1/BAF45B, DPF3/BAF45C, ACTL6B/BAF53B and actin. May be a component of the SWI/SNF-B (PBAF) chromatin remodeling complex, at least composed of SMARCA4/BRG1, SMARCB1/BAF47/SNF5, ACTL6A/BAF53A or ACTL6B/BAF53B, SMARCE1/BAF57, SMARCD1/BAF60A, SMARCD2/BAF60B, perhaps SMARCD3/BAF60C, SMARCC1/BAF155, SMARCC2/BAF170, PBRM1/BAF180, ARID2/BAF200 and actin. Interacts with SMARCA4/BRG1/BAF190A. Component of SWI/SNF (GBAF) subcomplex, which includes at least BICRA or BICRAL (mutually exclusive), BRD9, SS18, SMARCA2/BRM, SMARCA4/BRG1/BAF190A, ACTL6A/BAF53, SMARCC1/BAF155, and SMARCD1/BAF60A. The precise distribution of the related SMARCD1, SMARCD2 and SMARCD3 proteins among these and other SWI/SNF nucleosome-remodeling complexes is not fully known. May allow recruitment of SWI/SNF containing complexes specifically to promoters where these factors are located. Also interacts with several nuclear receptors including PPARG/NR1C3, RXRA/NR1F1, ESR1, NR5A1, NR5A2/LRH1 and other transcriptional activators including the HLH protein SREBF1/SREBP1 and the homeobox protein PBX1. Interacts with PRDM1/BLIMP1. As to expression, isoform 2 and isoform 1 are expressed in brain, heart, kidney, placenta, prostate, salivary gland, spleen, testis, thyroid, trachea and uterus. Isoform 1 is also expressed in skeletal muscle and adipose tissue.

Its subcellular location is the nucleus. Functionally, involved in transcriptional activation and repression of select genes by chromatin remodeling (alteration of DNA-nucleosome topology). Component of SWI/SNF chromatin remodeling complexes that carry out key enzymatic activities, changing chromatin structure by altering DNA-histone contacts within a nucleosome in an ATP-dependent manner. Stimulates nuclear receptor mediated transcription. Belongs to the neural progenitors-specific chromatin remodeling complex (npBAF complex) and the neuron-specific chromatin remodeling complex (nBAF complex). During neural development a switch from a stem/progenitor to a postmitotic chromatin remodeling mechanism occurs as neurons exit the cell cycle and become committed to their adult state. The transition from proliferating neural stem/progenitor cells to postmitotic neurons requires a switch in subunit composition of the npBAF and nBAF complexes. As neural progenitors exit mitosis and differentiate into neurons, npBAF complexes which contain ACTL6A/BAF53A and PHF10/BAF45A, are exchanged for homologous alternative ACTL6B/BAF53B and DPF1/BAF45B or DPF3/BAF45C subunits in neuron-specific complexes (nBAF). The npBAF complex is essential for the self-renewal/proliferative capacity of the multipotent neural stem cells. The nBAF complex along with CREST plays a role regulating the activity of genes essential for dendrite growth. The sequence is that of SWI/SNF-related matrix-associated actin-dependent regulator of chromatin subfamily D member 3 (SMARCD3) from Homo sapiens (Human).